We begin with the raw amino-acid sequence, 207 residues long: MSHGPLRVGIGGPVGAGKTTLTEKLCAALAHRCSMAVITNDIYTREDAEALMRAQVLPAERIRGVETGGCPHTAIREDASINLAAVADLRRAFPDLDLILIESGGDNLAATFSPELADLTLYVIDTAAGQDIPRKRGPGLARSDLLVVNKTDLAPHVGVDLRLLEEDTKTARGRRPYVMAQLRRGAGVAEIVAFLEREGGLQLLPQE.

A GTP-binding site is contributed by 12–19 (GPVGAGKT).

Belongs to the SIMIBI class G3E GTPase family. UreG subfamily. In terms of assembly, homodimer. UreD, UreF and UreG form a complex that acts as a GTP-hydrolysis-dependent molecular chaperone, activating the urease apoprotein by helping to assemble the nickel containing metallocenter of UreC. The UreE protein probably delivers the nickel.

The protein resides in the cytoplasm. Its function is as follows. Facilitates the functional incorporation of the urease nickel metallocenter. This process requires GTP hydrolysis, probably effectuated by UreG. This is Urease accessory protein UreG from Cereibacter sphaeroides (strain ATCC 17025 / ATH 2.4.3) (Rhodobacter sphaeroides).